The sequence spans 968 residues: Isoleucine--tRNA ligase (968 aa).

Positions 68-78 match the 'HIGH' region motif; sequence PYANGALHMGH. E582 lines the L-isoleucyl-5'-AMP pocket. Positions 623–627 match the 'KMSKS' region motif; the sequence is KMSKS. An ATP-binding site is contributed by K626. C936, C939, C956, and C959 together coordinate Zn(2+).

The protein belongs to the class-I aminoacyl-tRNA synthetase family. IleS type 1 subfamily. Monomer. Zn(2+) is required as a cofactor.

The protein localises to the cytoplasm. The catalysed reaction is tRNA(Ile) + L-isoleucine + ATP = L-isoleucyl-tRNA(Ile) + AMP + diphosphate. Functionally, catalyzes the attachment of isoleucine to tRNA(Ile). As IleRS can inadvertently accommodate and process structurally similar amino acids such as valine, to avoid such errors it has two additional distinct tRNA(Ile)-dependent editing activities. One activity is designated as 'pretransfer' editing and involves the hydrolysis of activated Val-AMP. The other activity is designated 'posttransfer' editing and involves deacylation of mischarged Val-tRNA(Ile). This Prochlorococcus marinus (strain MIT 9312) protein is Isoleucine--tRNA ligase.